Here is a 525-residue protein sequence, read N- to C-terminus: GMP synthase [glutamine-hydrolyzing] (525 aa).

The region spanning 9–207 is the Glutamine amidotransferase type-1 domain; the sequence is RILILDFGSQ…VRDICQCEAL (199 aa). Cys-86 serves as the catalytic Nucleophile. Residues His-181 and Glu-183 contribute to the active site. The region spanning 208–400 is the GMPS ATP-PPase domain; the sequence is WTPAKIIDDA…LGLPYDMLYR (193 aa). 235–241 is a binding site for ATP; sequence SGGVDSS.

In terms of assembly, homodimer.

It catalyses the reaction XMP + L-glutamine + ATP + H2O = GMP + L-glutamate + AMP + diphosphate + 2 H(+). The protein operates within purine metabolism; GMP biosynthesis; GMP from XMP (L-Gln route): step 1/1. Functionally, catalyzes the synthesis of GMP from XMP. In Salmonella newport (strain SL254), this protein is GMP synthase [glutamine-hydrolyzing].